Here is a 421-residue protein sequence, read N- to C-terminus: ATP-dependent RNA helicase RhlB (421 aa).

The Q motif signature appears at 9 to 37 (QKFSDFALHPVVVQALEKKGFYNCTPIQA). The region spanning 40–219 (LPLTLAGRDV…FEQMNNAEYV (180 aa)) is the Helicase ATP-binding domain. 53–60 (AQTGTGKT) contacts ATP. Residues 165-168 (DEAD) carry the DEAD box motif. The region spanning 245 to 390 (RLLQTLIEEE…VSKYNPDALL (146 aa)) is the Helicase C-terminal domain. Residues 390 to 421 (LSELPPPKRLSRPRTGNGPRRSGAPRNRRRTG) form a disordered region. Low complexity predominate over residues 405–414 (GNGPRRSGAP).

It belongs to the DEAD box helicase family. RhlB subfamily. In terms of assembly, component of the RNA degradosome, which is a multiprotein complex involved in RNA processing and mRNA degradation.

The protein localises to the cytoplasm. The catalysed reaction is ATP + H2O = ADP + phosphate + H(+). Functionally, DEAD-box RNA helicase involved in RNA degradation. Has RNA-dependent ATPase activity and unwinds double-stranded RNA. The chain is ATP-dependent RNA helicase RhlB from Cronobacter sakazakii (strain ATCC BAA-894) (Enterobacter sakazakii).